Here is a 216-residue protein sequence, read N- to C-terminus: Pyridoxine/pyridoxamine 5'-phosphate oxidase (216 aa).

FMN is bound by residues arginine 63–lysine 68, tyrosine 78–serine 79, lysine 85, and glutamine 107. Lysine 68 is a substrate binding site. Residues tyrosine 125 and arginine 129 each contribute to the substrate site. Residues glutamine 142 to serine 143 and tryptophan 187 contribute to the FMN site. Arginine 193 to histidine 195 is a binding site for substrate. Arginine 197 contacts FMN.

The protein belongs to the pyridoxamine 5'-phosphate oxidase family. In terms of assembly, homodimer. Requires FMN as cofactor.

The enzyme catalyses pyridoxamine 5'-phosphate + O2 + H2O = pyridoxal 5'-phosphate + H2O2 + NH4(+). It catalyses the reaction pyridoxine 5'-phosphate + O2 = pyridoxal 5'-phosphate + H2O2. The protein operates within cofactor metabolism; pyridoxal 5'-phosphate salvage; pyridoxal 5'-phosphate from pyridoxamine 5'-phosphate: step 1/1. Its pathway is cofactor metabolism; pyridoxal 5'-phosphate salvage; pyridoxal 5'-phosphate from pyridoxine 5'-phosphate: step 1/1. In terms of biological role, catalyzes the oxidation of either pyridoxine 5'-phosphate (PNP) or pyridoxamine 5'-phosphate (PMP) into pyridoxal 5'-phosphate (PLP). The polypeptide is Pyridoxine/pyridoxamine 5'-phosphate oxidase (Bradyrhizobium sp. (strain BTAi1 / ATCC BAA-1182)).